Reading from the N-terminus, the 749-residue chain is Catalase-peroxidase 2 (749 aa).

The N-terminal stretch at 1–27 (MFKRTIPLFAAFTLAISPSIFPNYAHA) is a signal peptide. The tryptophyl-tyrosyl-methioninium (Trp-Tyr) (with M-255) cross-link spans 107–229 (WHAAGTYRIY…LAATVMGLIY (123 aa)). The Proton acceptor role is filled by His-108. A cross-link (tryptophyl-tyrosyl-methioninium (Tyr-Met) (with W-107)) is located at residues 229-255 (YVNPEGPNGVPDPLAAAEKIRETFGRM). His-270 lines the heme b pocket.

Belongs to the peroxidase family. Peroxidase/catalase subfamily. In terms of assembly, homodimer or homotetramer. The cofactor is heme b. In terms of processing, formation of the three residue Trp-Tyr-Met cross-link is important for the catalase, but not the peroxidase activity of the enzyme.

It carries out the reaction H2O2 + AH2 = A + 2 H2O. It catalyses the reaction 2 H2O2 = O2 + 2 H2O. In terms of biological role, bifunctional enzyme with both catalase and broad-spectrum peroxidase activity. This Legionella pneumophila subsp. pneumophila (strain Philadelphia 1 / ATCC 33152 / DSM 7513) protein is Catalase-peroxidase 2.